The chain runs to 623 residues: Glutathione import ATP-binding protein GsiA (623 aa).

ABC transporter domains lie at 15 to 269 (VENL…RALL) and 314 to 564 (LRVR…RKLL). ATP-binding positions include 49 to 56 (GESGSGKS) and 357 to 364 (GESGSGKS).

This sequence belongs to the ABC transporter superfamily. Glutathione importer (TC 3.A.1.5.11) family. As to quaternary structure, the complex is composed of two ATP-binding proteins (GsiA), two transmembrane proteins (GsiC and GsiD) and a solute-binding protein (GsiB).

Its subcellular location is the cell inner membrane. The enzyme catalyses glutathione(out) + ATP + H2O = glutathione(in) + ADP + phosphate + H(+). Its activity is regulated as follows. Inhibited by verapamil but not by carbonyl cyanide m-chlorophenylhydrazone (CCCP). Part of the ABC transporter complex GsiABCD involved in glutathione import. Responsible for energy coupling to the transport system. The protein is Glutathione import ATP-binding protein GsiA of Escherichia coli (strain K12).